A 430-amino-acid polypeptide reads, in one-letter code: Serine hydroxymethyltransferase (430 aa).

Residues leucine 126 and 130–132 contribute to the (6S)-5,6,7,8-tetrahydrofolate site; that span reads GHL. Lysine 235 is modified (N6-(pyridoxal phosphate)lysine).

Belongs to the SHMT family. As to quaternary structure, homodimer. Requires pyridoxal 5'-phosphate as cofactor.

The protein resides in the cytoplasm. It carries out the reaction (6R)-5,10-methylene-5,6,7,8-tetrahydrofolate + glycine + H2O = (6S)-5,6,7,8-tetrahydrofolate + L-serine. It participates in one-carbon metabolism; tetrahydrofolate interconversion. Its pathway is amino-acid biosynthesis; glycine biosynthesis; glycine from L-serine: step 1/1. Catalyzes the reversible interconversion of serine and glycine with tetrahydrofolate (THF) serving as the one-carbon carrier. This reaction serves as the major source of one-carbon groups required for the biosynthesis of purines, thymidylate, methionine, and other important biomolecules. Also exhibits THF-independent aldolase activity toward beta-hydroxyamino acids, producing glycine and aldehydes, via a retro-aldol mechanism. In Leifsonia xyli subsp. xyli (strain CTCB07), this protein is Serine hydroxymethyltransferase.